The chain runs to 84 residues: Anaphase-promoting complex subunit 11 (84 aa).

Residues C23, C26, C34, C37, C44, C51, H53, H56, H58, C59, C73, and C76 each contribute to the Zn(2+) site. An RING-type zinc finger spans residues 34–77; it reads CPDCKVPGDDCPLVWGQCSHCFHMHCILKWLNAQQVQQHCPMCR.

It belongs to the RING-box family. As to quaternary structure, the mammalian APC/C is composed at least of 14 distinct subunits ANAPC1, ANAPC2, CDC27/APC3, ANAPC4, ANAPC5, CDC16/APC6, ANAPC7, CDC23/APC8, ANAPC10, ANAPC11, CDC26/APC12, ANAPC13, ANAPC15 and ANAPC16 that assemble into a complex of at least 19 chains with a combined molecular mass of around 1.2 MDa; APC/C interacts with FZR1 and FBXO5. Interacts with the cullin domain of ANAPC2. Interacts with UBE2D2. Auto-ubiquitinated.

It localises to the cytoplasm. It is found in the nucleus. It functions in the pathway protein modification; protein ubiquitination. Functionally, together with the cullin protein ANAPC2, constitutes the catalytic component of the anaphase promoting complex/cyclosome (APC/C), a cell cycle-regulated E3 ubiquitin ligase that controls progression through mitosis and the G1 phase of the cell cycle. The APC/C complex acts by mediating ubiquitination and subsequent degradation of target proteins: it mainly mediates the formation of 'Lys-11'-linked polyubiquitin chains and, to a lower extent, the formation of 'Lys-48'- and 'Lys-63'-linked polyubiquitin chains. The APC/C complex catalyzes assembly of branched 'Lys-11'-/'Lys-48'-linked branched ubiquitin chains on target proteins. May recruit the E2 ubiquitin-conjugating enzymes to the complex. The polypeptide is Anaphase-promoting complex subunit 11 (ANAPC11) (Bos taurus (Bovine)).